We begin with the raw amino-acid sequence, 116 residues long: Ribonuclease P protein component (116 aa).

This sequence belongs to the RnpA family. In terms of assembly, consists of a catalytic RNA component (M1 or rnpB) and a protein subunit.

The enzyme catalyses Endonucleolytic cleavage of RNA, removing 5'-extranucleotides from tRNA precursor.. Its function is as follows. RNaseP catalyzes the removal of the 5'-leader sequence from pre-tRNA to produce the mature 5'-terminus. It can also cleave other RNA substrates such as 4.5S RNA. The protein component plays an auxiliary but essential role in vivo by binding to the 5'-leader sequence and broadening the substrate specificity of the ribozyme. This chain is Ribonuclease P protein component, found in Lachnoclostridium phytofermentans (strain ATCC 700394 / DSM 18823 / ISDg) (Clostridium phytofermentans).